Reading from the N-terminus, the 270-residue chain is Aquaporin-11 (270 aa).

2 consecutive transmembrane segments (helical) span residues 5–25 (IMTMYPLLISILHILFIISIC) and 59–79 (FELGVITQIYGFSAYALGLFF). Positions 94–96 (DPS) match the NPA 1 motif. The chain crosses the membrane as a helical span at residues 120–140 (IMGAAVSYRFAKIFWSFGLMA). Asn148 carries an N-linked (GlcNAc...) asparagine glycan. A run of 2 helical transmembrane segments spans residues 153-173 (ASLQVPVLIGLGFETFETIVN) and 184-204 (MLISAISDVCITFFGLFVSGG). The short motif at 207 to 209 (NPT) is the NPA 2 element. The chain crosses the membrane as a helical span at residues 220 to 240 (GLSGPSFFLVYWFGPILGSSI).

It belongs to the MIP/aquaporin (TC 1.A.8) family.

The protein resides in the membrane. The enzyme catalyses H2O(in) = H2O(out). Functionally, probable intracellular unorthodox aquaporin that may modulate the water content and osmolytes during anhydrobiosis. The sequence is that of Aquaporin-11 from Milnesium tardigradum (Water bear).